The sequence spans 270 residues: MFAPGHITGFFVICKSSNKLKTGSIGAGITIDRGVNVELKEGNGSIFYNNKKVNICAVEKVIEHYKKFGYNDDYDIIFSSDFPLGSGLGMSGGCALILAKKLNEMLNLNENYAEIAHISEVECGTGLGDVIAQYVKGFVIRKTPGFPINVEKIVVDDDYYIIIEIFGKKETKEIITNDIWIKKINEYGERCLNELLKNPTLENFVNLSYEFAVNTGLINEKILSICEDLKFTVGASQSMLGNTLFCISKKETLEDALSILKNPIVCNIYY.

The protein belongs to the GHMP kinase family. PoK subfamily.

The enzyme catalyses (R)-pantoate + ATP = (R)-4-phosphopantoate + ADP + H(+). It functions in the pathway cofactor biosynthesis; coenzyme A biosynthesis. Functionally, phosphorylates (R)-pantoate to form (R)-4-phosphopantoate in the CoA biosynthesis pathway. The chain is Pantoate kinase from Methanocaldococcus jannaschii (strain ATCC 43067 / DSM 2661 / JAL-1 / JCM 10045 / NBRC 100440) (Methanococcus jannaschii).